The primary structure comprises 460 residues: Mercuric reductase (460 aa).

An HMA domain is found at 1 to 65 (MTHLKITGMT…AVAGLGYKAM (65 aa)). Positions 11 and 14 each coordinate a metal cation. Residues A110, G130, and T135 each contribute to the FAD site. C136 and C141 are disulfide-bonded. 2 residues coordinate FAD: K145 and A211. 2 residues coordinate Hg(2+): C457 and C458.

Belongs to the class-I pyridine nucleotide-disulfide oxidoreductase family. Homodimer. It depends on FAD as a cofactor.

It carries out the reaction Hg + NADP(+) + H(+) = Hg(2+) + NADPH. Functionally, resistance to Hg(2+) in bacteria appears to be governed by a specialized system which includes mercuric reductase. MerA protein is responsible for volatilizing mercury as Hg(0). This Serratia marcescens protein is Mercuric reductase (merA).